The following is a 97-amino-acid chain: Aspartyl/glutamyl-tRNA(Asn/Gln) amidotransferase subunit C (97 aa).

It belongs to the GatC family. Heterotrimer of A, B and C subunits.

The enzyme catalyses L-glutamyl-tRNA(Gln) + L-glutamine + ATP + H2O = L-glutaminyl-tRNA(Gln) + L-glutamate + ADP + phosphate + H(+). It catalyses the reaction L-aspartyl-tRNA(Asn) + L-glutamine + ATP + H2O = L-asparaginyl-tRNA(Asn) + L-glutamate + ADP + phosphate + 2 H(+). Allows the formation of correctly charged Asn-tRNA(Asn) or Gln-tRNA(Gln) through the transamidation of misacylated Asp-tRNA(Asn) or Glu-tRNA(Gln) in organisms which lack either or both of asparaginyl-tRNA or glutaminyl-tRNA synthetases. The reaction takes place in the presence of glutamine and ATP through an activated phospho-Asp-tRNA(Asn) or phospho-Glu-tRNA(Gln). In Listeria innocua serovar 6a (strain ATCC BAA-680 / CLIP 11262), this protein is Aspartyl/glutamyl-tRNA(Asn/Gln) amidotransferase subunit C.